Here is a 222-residue protein sequence, read N- to C-terminus: Niacin transporter NiaX (222 aa).

A run of 5 helical transmembrane segments spans residues 34-54 (NLII…MMPV), 72-94 (MAAM…LGFM), 101-120 (TIWL…AYVL), 135-155 (IFNF…VYAF), and 167-187 (ALLN…MIDF).

The protein belongs to the vitamin uptake transporter (VUT/ECF) (TC 2.A.88) family. As to quaternary structure, in L.lactis forms a stable complex with EcfA, EcfA' and EcfT. In E.coli forms a stable energy-coupling factor (ECF) transporter complex composed of 2 membrane-embedded substrate-binding proteins (S component), 2 ATP-binding proteins (A and A' components) and 2 transmembrane proteins (T component), probably with a stoichiometry of 2:1:1:2. May be able to interact with more than 1 S component at a time.

It is found in the cell membrane. In terms of biological role, probably a niacin-binding protein that interacts with the energy-coupling factor (ECF) ABC-transporter complex. Unlike classic ABC transporters this ECF transporter provides the energy necessary to transport a number of different substrates. The substrates themselves are bound by transmembrane, not extracytoplasmic soluble proteins. Uptake of niacin into proteosomes containing EcfA1A2T and Niax has been demonstrated. Uptake requires hydrolyzable Mg-ATP and is substrate-specific; NiaX-containing proteosomes did not transport riboflavin. This is Niacin transporter NiaX (niaX) from Lactococcus lactis subsp. cremoris (strain MG1363).